We begin with the raw amino-acid sequence, 426 residues long: Glutamyl-tRNA reductase (426 aa).

Substrate is bound by residues 52 to 55 (TCNR), S110, 115 to 117 (EYE), and Q121. Residue C53 is the Nucleophile of the active site. An NADP(+)-binding site is contributed by 190–195 (GAGEMA).

It belongs to the glutamyl-tRNA reductase family. Homodimer.

The enzyme catalyses (S)-4-amino-5-oxopentanoate + tRNA(Glu) + NADP(+) = L-glutamyl-tRNA(Glu) + NADPH + H(+). It functions in the pathway porphyrin-containing compound metabolism; protoporphyrin-IX biosynthesis; 5-aminolevulinate from L-glutamyl-tRNA(Glu): step 1/2. Catalyzes the NADPH-dependent reduction of glutamyl-tRNA(Glu) to glutamate 1-semialdehyde (GSA). This chain is Glutamyl-tRNA reductase, found in Saccharolobus solfataricus (strain ATCC 35092 / DSM 1617 / JCM 11322 / P2) (Sulfolobus solfataricus).